The chain runs to 550 residues: 2-succinyl-5-enolpyruvyl-6-hydroxy-3-cyclohexene-1-carboxylate synthase (550 aa).

This sequence belongs to the TPP enzyme family. MenD subfamily. In terms of assembly, homodimer. The cofactor is Mg(2+). Requires Mn(2+) as cofactor. Thiamine diphosphate serves as cofactor.

It catalyses the reaction isochorismate + 2-oxoglutarate + H(+) = 5-enolpyruvoyl-6-hydroxy-2-succinyl-cyclohex-3-ene-1-carboxylate + CO2. Its pathway is quinol/quinone metabolism; 1,4-dihydroxy-2-naphthoate biosynthesis; 1,4-dihydroxy-2-naphthoate from chorismate: step 2/7. It participates in quinol/quinone metabolism; menaquinone biosynthesis. In terms of biological role, catalyzes the thiamine diphosphate-dependent decarboxylation of 2-oxoglutarate and the subsequent addition of the resulting succinic semialdehyde-thiamine pyrophosphate anion to isochorismate to yield 2-succinyl-5-enolpyruvyl-6-hydroxy-3-cyclohexene-1-carboxylate (SEPHCHC). This Desulfitobacterium hafniense (strain DSM 10664 / DCB-2) protein is 2-succinyl-5-enolpyruvyl-6-hydroxy-3-cyclohexene-1-carboxylate synthase.